The primary structure comprises 570 residues: Urease subunit alpha (570 aa).

Ni(2+) is bound by residues H137, H139, and K220. Position 220 is an N6-carboxylysine (K220). H222 is a substrate binding site. Positions 249 and 275 each coordinate Ni(2+). H323 acts as the Proton donor in catalysis. D363 contributes to the Ni(2+) binding site.

Belongs to the metallo-dependent hydrolases superfamily. Urease alpha subunit family. In terms of assembly, heterotrimer of UreA (gamma), UreB (beta) and UreC (alpha) subunits. Three heterotrimers associate to form the active enzyme. Requires Ni cation as cofactor. Carboxylation allows a single lysine to coordinate two nickel ions.

Its subcellular location is the cytoplasm. The catalysed reaction is urea + 2 H2O + H(+) = hydrogencarbonate + 2 NH4(+). It functions in the pathway nitrogen metabolism; urea degradation; CO(2) and NH(3) from urea (urease route): step 1/1. This is Urease subunit alpha from Lachnoclostridium phytofermentans (strain ATCC 700394 / DSM 18823 / ISDg) (Clostridium phytofermentans).